We begin with the raw amino-acid sequence, 511 residues long: TNF receptor-associated factor family protein DDB_G0290931 (511 aa).

Residues 27–67 (CPICFELIYKKSIYQCSSGHYACQECWEKSLEIKQECMICR) form an RING-type; degenerate zinc finger. A coiled-coil region spans residues 103–169 (IDGANQENED…RKLIKDEENG (67 aa)). A disordered region spans residues 107–159 (NQENEDEENEDEENEDDEDENEDEENGEDDEDKDEDEENENENEENKDEENEK). The span at 109–155 (ENEDEENEDEENEDDEDENEDEENGEDDEDKDEDEENENENEENKDE) shows a compositional bias: acidic residues. 2 TRAF-type zinc fingers span residues 181 to 234 (RHIQ…QVQL) and 236 to 293 (NHYD…SELQ). A coiled-coil region spans residues 324 to 358 (ELLLKEIEKSKITCSELQRKNDELSSLITEIDDNY). The MATH domain maps to 374-499 (GYTNKWIISN…DDKLTINIYV (126 aa)).

This sequence belongs to the TNF receptor-associated factor family. A subfamily.

It is found in the cytoplasm. Functionally, probable adapter protein and signal transducer that links members of the tumor necrosis factor receptor family to different signaling pathways by association with the receptor cytoplasmic domain and kinases. This Dictyostelium discoideum (Social amoeba) protein is TNF receptor-associated factor family protein DDB_G0290931.